We begin with the raw amino-acid sequence, 250 residues long: Leucyl/phenylalanyl-tRNA--protein transferase (250 aa).

It belongs to the L/F-transferase family.

The protein localises to the cytoplasm. It catalyses the reaction N-terminal L-lysyl-[protein] + L-leucyl-tRNA(Leu) = N-terminal L-leucyl-L-lysyl-[protein] + tRNA(Leu) + H(+). It carries out the reaction N-terminal L-arginyl-[protein] + L-leucyl-tRNA(Leu) = N-terminal L-leucyl-L-arginyl-[protein] + tRNA(Leu) + H(+). The catalysed reaction is L-phenylalanyl-tRNA(Phe) + an N-terminal L-alpha-aminoacyl-[protein] = an N-terminal L-phenylalanyl-L-alpha-aminoacyl-[protein] + tRNA(Phe). Functionally, functions in the N-end rule pathway of protein degradation where it conjugates Leu, Phe and, less efficiently, Met from aminoacyl-tRNAs to the N-termini of proteins containing an N-terminal arginine or lysine. The polypeptide is Leucyl/phenylalanyl-tRNA--protein transferase (Bordetella avium (strain 197N)).